A 434-amino-acid polypeptide reads, in one-letter code: ATP-dependent protease ATPase subunit HslU (434 aa).

ATP contacts are provided by residues Ile18, Gly60 to Glu65, Asp247, Glu312, and Arg384.

This sequence belongs to the ClpX chaperone family. HslU subfamily. In terms of assembly, a double ring-shaped homohexamer of HslV is capped on each side by a ring-shaped HslU homohexamer. The assembly of the HslU/HslV complex is dependent on binding of ATP.

The protein localises to the cytoplasm. In terms of biological role, ATPase subunit of a proteasome-like degradation complex; this subunit has chaperone activity. The binding of ATP and its subsequent hydrolysis by HslU are essential for unfolding of protein substrates subsequently hydrolyzed by HslV. HslU recognizes the N-terminal part of its protein substrates and unfolds these before they are guided to HslV for hydrolysis. The polypeptide is ATP-dependent protease ATPase subunit HslU (Brucella melitensis biotype 2 (strain ATCC 23457)).